Here is a 1083-residue protein sequence, read N- to C-terminus: Probable arabinosyltransferase B (1083 aa).

Helical transmembrane passes span 23–45, 222–239, 252–274, 331–350, 357–379, 421–443, 456–478, 525–542, 555–572, 576–598, 611–633, 648–670, and 690–712; these read VARW…TPLL, FAMM…VALW, LIPA…FLLW, SMWI…LLLS, LGPA…LAAW, TAAF…LAGG, AVGA…TVVF, FGFL…LITL, AWRL…LTFA, WVHH…TVLV, AFLA…WWYV, DGIT…AYYL, and FWAP…MVAG.

It belongs to the emb family.

The protein resides in the cell membrane. Arabinosyl transferase responsible for the polymerization of arabinose into the arabinan of arabinogalactan. The protein is Probable arabinosyltransferase B (embB) of Mycobacterium leprae (strain TN).